The sequence spans 215 residues: ATP-dependent Clp protease proteolytic subunit 3 (215 aa).

S119 (nucleophile) is an active-site residue. H144 is an active-site residue.

This sequence belongs to the peptidase S14 family. As to quaternary structure, fourteen ClpP subunits assemble into 2 heptameric rings which stack back to back to give a disk-like structure with a central cavity, resembling the structure of eukaryotic proteasomes.

It localises to the cytoplasm. It carries out the reaction Hydrolysis of proteins to small peptides in the presence of ATP and magnesium. alpha-casein is the usual test substrate. In the absence of ATP, only oligopeptides shorter than five residues are hydrolyzed (such as succinyl-Leu-Tyr-|-NHMec, and Leu-Tyr-Leu-|-Tyr-Trp, in which cleavage of the -Tyr-|-Leu- and -Tyr-|-Trp bonds also occurs).. Cleaves peptides in various proteins in a process that requires ATP hydrolysis. Has a chymotrypsin-like activity. Plays a major role in the degradation of misfolded proteins. This chain is ATP-dependent Clp protease proteolytic subunit 3, found in Prochlorococcus marinus subsp. pastoris (strain CCMP1986 / NIES-2087 / MED4).